A 242-amino-acid chain; its full sequence is Ribosomal RNA small subunit methyltransferase G (242 aa).

Residues glycine 82, phenylalanine 87, 133 to 134, and arginine 152 each bind S-adenosyl-L-methionine; that span reads AE.

Belongs to the methyltransferase superfamily. RNA methyltransferase RsmG family.

The protein resides in the cytoplasm. Its function is as follows. Specifically methylates the N7 position of a guanine in 16S rRNA. This chain is Ribosomal RNA small subunit methyltransferase G, found in Acetivibrio thermocellus (strain ATCC 27405 / DSM 1237 / JCM 9322 / NBRC 103400 / NCIMB 10682 / NRRL B-4536 / VPI 7372) (Clostridium thermocellum).